The sequence spans 547 residues: Carboxypeptidase N subunit 2 (547 aa).

The signal sequence occupies residues 1-21 (MFPGAWLCWVSLLLLARLTQP). Residues 22 to 49 (CPVGCDCFGREVFCSDEQLADIPPDIPP) form the LRRNT domain. Residues asparagine 74, asparagine 111, and asparagine 119 are each glycosylated (N-linked (GlcNAc...) asparagine). LRR repeat units follow at residues 98 to 119 (RLQD…IFSN), 122 to 143 (SLEK…LFCH), 146 to 167 (ILES…LFQS), 170 to 191 (DLRT…AFQS), 194 to 215 (GLQM…ALGS), 218 to 239 (SLQE…LFSQ), 242 to 263 (SLEM…LFSS), 266 to 287 (NLTF…LFAH), 290 to 311 (GLLH…AFTN), 314 to 335 (RLVS…VFRN), 338 to 359 (QLVK…LFHN), and 362 to 383 (RLQL…IFDT). Residues asparagine 266 and asparagine 311 are each glycosylated (N-linked (GlcNAc...) asparagine). 3 N-linked (GlcNAc...) asparagine glycosylation sites follow: asparagine 348, asparagine 359, and asparagine 367. The LRRCT domain occupies 395-447 (NPWQCDCHLSYLTSWLRLYNNQISNTHTFCAGPAYLKGQLVPNLKQEQLICPV). Residue asparagine 520 is glycosylated (N-linked (GlcNAc...) asparagine).

As to quaternary structure, tetramer of two catalytic chains and two glycosylated inactive chains.

The protein resides in the secreted. The 83 kDa subunit binds and stabilizes the catalytic subunit at 37 degrees Celsius and keeps it in circulation. Under some circumstances it may be an allosteric modifier of the catalytic subunit. This chain is Carboxypeptidase N subunit 2 (Cpn2), found in Mus musculus (Mouse).